The sequence spans 284 residues: Prestalk D11 protein (284 aa).

Residues 1-25 form the signal peptide; that stretch reads MLNKLILLLILSSCLVLSVKSEVNV. One copy of the A-1 repeat lies at 25–64; it reads VDCSLVRCAQPICKPHYRLNMTDSCCGRCEPCTDVACTLQ. The B-1 repeat unit spans residues 65–82; that stretch reads VKYCQDGEVPTGCCPCTL. One copy of the A-2 repeat lies at 88–126; that stretch reads DCSLVKCARPVCKPYYRLNMTDSCCGRCEPCTGVACTLQ. The stretch at 127-144 is one B-2 repeat; sequence IKYCKDGEVPTGCCPCTP. A C-1 repeat occupies 145-159; the sequence is QPTKKPDCSKVPCPK. One copy of the B-3 repeat lies at 161 to 178; it reads LKYCQEGELPTGCCPCTP. The stretch at 179–193 is one C-2 repeat; sequence QPTKKPDCSRVPCPK. The B-4 repeat unit spans residues 195–212; that stretch reads LKYCKEGELPTGCCPCTP. The C-3 repeat unit spans residues 213-228; the sequence is QPTKKPDCSDVMCTMD. Residues 229 to 246 form a B-5 repeat; it reads IRYCKNGELPTGCCPCTP. The stretch at 247–262 is one C-4 repeat; that stretch reads QETKVPDCSKAMCTMD. The B-6 repeat unit spans residues 263–278; sequence IKYCKPGEKPFGCCPC.

The sequence is that of Prestalk D11 protein (ampA) from Dictyostelium discoideum (Social amoeba).